The sequence spans 211 residues: Flagellar calcium-binding protein (211 aa).

The disordered stretch occupies residues 1-29 (MGACGSKGSTSDKGLASDKDGKKAKDRKE). Over residues 15-29 (LASDKDGKKAKDRKE) the composition is skewed to basic and acidic residues. EF-hand domains follow at residues 45 to 80 (EAKQ…VLKL), 81 to 116 (DEFT…FVEF), 127 to 162 (YDFF…LEAW), and 164 to 199 (AKVE…VKLD). Ca(2+) is bound by residues Asp58, Asn60, Thr62, Lys64, and Glu69. Residues Asp140, Ser142, Asn144, Glu151, Asp177, Asn179, Thr181, Ser183, and Glu188 each coordinate Ca(2+).

This sequence belongs to the calflagin family.

It is found in the cell projection. It localises to the cilium. The protein localises to the flagellum. May contribute to the rapid motility of the trypanosomes, playing a role either in flagellar structure or in calcium metabolism. Could alternate between a GDP-bound inactive form to a calcium/GTP-bound active form. In Trypanosoma cruzi, this protein is Flagellar calcium-binding protein (FCABP).